A 662-amino-acid chain; its full sequence is UvrABC system protein B (662 aa).

The Helicase ATP-binding domain occupies 31–188 (DNIEGGEKAQ…NDLVDIQFER (158 aa)). Residue 44-51 (GATGTGKT) coordinates ATP. A Beta-hairpin motif is present at residues 97–120 (YYDYYQPEAYVPSSDTYIEKDSSV). The Helicase C-terminal domain maps to 435–601 (QIDDLLGEIN…TIKKEIRDLI (167 aa)). The UVR domain maps to 626 to 661 (KELVKKLEKQMQEAVEVLDFELAAQIRDMMLEVKAL).

The protein belongs to the UvrB family. As to quaternary structure, forms a heterotetramer with UvrA during the search for lesions. Interacts with UvrC in an incision complex.

Its subcellular location is the cytoplasm. Functionally, the UvrABC repair system catalyzes the recognition and processing of DNA lesions. A damage recognition complex composed of 2 UvrA and 2 UvrB subunits scans DNA for abnormalities. Upon binding of the UvrA(2)B(2) complex to a putative damaged site, the DNA wraps around one UvrB monomer. DNA wrap is dependent on ATP binding by UvrB and probably causes local melting of the DNA helix, facilitating insertion of UvrB beta-hairpin between the DNA strands. Then UvrB probes one DNA strand for the presence of a lesion. If a lesion is found the UvrA subunits dissociate and the UvrB-DNA preincision complex is formed. This complex is subsequently bound by UvrC and the second UvrB is released. If no lesion is found, the DNA wraps around the other UvrB subunit that will check the other stand for damage. In Streptococcus pneumoniae (strain ATCC 700669 / Spain 23F-1), this protein is UvrABC system protein B.